The primary structure comprises 431 residues: Adenylosuccinate synthetase (431 aa).

Residues 21–27 and 49–51 contribute to the GTP site; these read GDEGKGK and GHT. The active-site Proton acceptor is Asp22. 2 residues coordinate Mg(2+): Asp22 and Gly49. IMP contacts are provided by residues 22–25, 47–50, Thr138, Arg152, Asn230, Thr245, and Arg309; these read DEGK and NAGH. The active-site Proton donor is His50. 305-311 contacts substrate; it reads ATTGRPR. GTP is bound by residues Arg311, 337–339, and 419–421; these read KLD and GNG.

The protein belongs to the adenylosuccinate synthetase family. In terms of assembly, homodimer. Mg(2+) serves as cofactor.

It localises to the cytoplasm. The catalysed reaction is IMP + L-aspartate + GTP = N(6)-(1,2-dicarboxyethyl)-AMP + GDP + phosphate + 2 H(+). The protein operates within purine metabolism; AMP biosynthesis via de novo pathway; AMP from IMP: step 1/2. In terms of biological role, plays an important role in the de novo pathway and in the salvage pathway of purine nucleotide biosynthesis. Catalyzes the first committed step in the biosynthesis of AMP from IMP. The sequence is that of Adenylosuccinate synthetase from Paramecium tetraurelia.